A 146-amino-acid chain; its full sequence is uncharacterized protein (146 aa).

This is an uncharacterized protein from Acanthamoeba polyphaga mimivirus (APMV).